We begin with the raw amino-acid sequence, 97 residues long: UPF0390 protein CNBD1430 (97 aa).

Disordered stretches follow at residues 1 to 57 (MAQG…INNS) and 75 to 97 (RNVGELESGEGKDGKAKGKGKSR). Over residues 29-46 (GKREVAPKDRQRVLERSQ) the composition is skewed to basic and acidic residues. Positions 48-57 (KQLSSKINNS) are enriched in polar residues.

This sequence belongs to the UPF0390 family.

The sequence is that of UPF0390 protein CNBD1430 from Cryptococcus neoformans var. neoformans serotype D (strain B-3501A) (Filobasidiella neoformans).